The sequence spans 855 residues: Sucrose synthase 5 (855 aa).

Residues 279-758 (SIFNIVIFSI…GLQRICECYT (480 aa)) form a GT-B glycosyltransferase region.

The protein belongs to the glycosyltransferase 1 family. Plant sucrose synthase subfamily. Predominantly expressed in roots, flowers and immature seeds.

It is found in the cytoplasm. It localises to the membrane. The enzyme catalyses an NDP-alpha-D-glucose + D-fructose = a ribonucleoside 5'-diphosphate + sucrose + H(+). Its function is as follows. Sucrose-cleaving enzyme that provides UDP-glucose and fructose for various metabolic pathways. The protein is Sucrose synthase 5 (SUS5) of Oryza sativa subsp. japonica (Rice).